The primary structure comprises 322 residues: tRNA U34 carboxymethyltransferase (322 aa).

Carboxy-S-adenosyl-L-methionine is bound by residues lysine 91, tryptophan 105, lysine 110, glycine 129, 179–180 (LE), methionine 195, tyrosine 199, and arginine 314.

Belongs to the class I-like SAM-binding methyltransferase superfamily. CmoB family. As to quaternary structure, homotetramer.

The catalysed reaction is carboxy-S-adenosyl-L-methionine + 5-hydroxyuridine(34) in tRNA = 5-carboxymethoxyuridine(34) in tRNA + S-adenosyl-L-homocysteine + H(+). Its function is as follows. Catalyzes carboxymethyl transfer from carboxy-S-adenosyl-L-methionine (Cx-SAM) to 5-hydroxyuridine (ho5U) to form 5-carboxymethoxyuridine (cmo5U) at position 34 in tRNAs. This Pseudomonas aeruginosa (strain LESB58) protein is tRNA U34 carboxymethyltransferase.